Consider the following 707-residue polypeptide: Dendrin (707 aa).

Disordered stretches follow at residues 1-22, 67-86, 94-195, 213-273, and 342-377; these read MLDG…DEES, QNRT…RRPW, ATNW…PWGG, AGTA…KKRL, and TEVA…GSEE. Residues 103–134 adopt a coiled-coil conformation; that stretch reads AEVRAREQEKRKAASQEREAKETERKRRKAGG. Basic and acidic residues predominate over residues 105–127; sequence VRAREQEKRKAASQEREAKETER. The interval 113–131 is nuclear localization; the sequence is RKAASQEREAKETERKRRK. The interval 186-236 is interaction with MAGI2; the sequence is GVAWAGPWGGRRPGPPSYEAHLLLRGAAGTAPRRRWDRPPPYVAPPSYEGP. Residues 340-434 are interaction with ACTN1; the sequence is PVTEVALSGS…LEVWKVTRRA (95 aa). Over residues 359–369 the composition is skewed to basic residues; it reads PRSRQHLRGSR. Serine 387 carries the post-translational modification Phosphoserine. 2 disordered regions span residues 389–421 and 517–707; these read KKPP…EGTE and RVLN…GKRE. The tract at residues 406–707 is interaction with CD2AP and NPHS1; the sequence is GGTGWKESLG…TRKTPQGKRE (302 aa). 2 stretches are compositionally biased toward basic and acidic residues: residues 524 to 544 and 692 to 707; these read EGRE…EERS and GLVR…GKRE.

Forms a ternary complex with MAGI2 and SH3KBP1; recruits DDN to the cytoplasm. Interacts with MAGI1. Interacts with ACTN1 and may interact with WWC1. Interacts with the podocyte slit diaphragm proteins CD2AP, NPHS1 and NPHS2; the interaction with CD2AP and NPHS1 is direct. In terms of tissue distribution, specifically expressed in forebrain structures, particularly in neocortex, olfactory bulb, hippocampus, caudate-putamen, and limbic system (at protein level). Also detected in spleen, liver, kidney and placenta (at protein level).

The protein resides in the cell projection. It is found in the dendritic spine membrane. Its subcellular location is the cytoplasm. It localises to the endoplasmic reticulum membrane. The protein localises to the perikaryon. The protein resides in the nucleus. Promotes apoptosis of kidney glomerular podocytes. Podocytes are highly specialized cells essential to the ultrafiltration of blood, resulting in the extraction of urine and the retention of protein. The protein is Dendrin (Ddn) of Rattus norvegicus (Rat).